The chain runs to 770 residues: Capsid protein (770 aa).

Over residues 647 to 656 (MQQQPTTTDI) the composition is skewed to polar residues. Disordered regions lie at residues 647–678 (MQQQ…QEGE) and 697–717 (WEDS…TQTV). Basic and acidic residues predominate over residues 666-678 (RDTEVYHSSQEGE). A compositionally biased stretch (low complexity) spans 703 to 717 (EESGSQSSEEETQTV).

The protein belongs to the anelloviridae capsid protein family.

It localises to the virion. Self assemble to form an icosahedral capsid. The polypeptide is Capsid protein (Torque teno virus (isolate Human/Japan/TRM1/1999) (TTV)).